A 325-amino-acid chain; its full sequence is Beta-1,3-galactosyltransferase brn (325 aa).

Residues 1–7 (MQSKHRK) lie on the Cytoplasmic side of the membrane. Residues 8 to 28 (LLLRCLLVLPLILLVDYCGLL) form a helical; Signal-anchor for type II membrane protein membrane-spanning segment. Topologically, residues 29–325 (THLHELNFER…WNECRSANYA (297 aa)) are lumenal. Asparagine 149 and asparagine 166 each carry an N-linked (GlcNAc...) asparagine glycan.

It belongs to the glycosyltransferase 31 family.

Its subcellular location is the golgi apparatus membrane. The enzyme catalyses a ganglioside GM2 (d18:1(4E)) + UDP-alpha-D-galactose = a ganglioside GM1 (d18:1(4E)) + UDP + H(+). Functionally, neurogenic protein essential for the development and maintenance of epithelial structure. Required in the germline for establishing the follicular epithelium and for determining the dorsal-ventral polarity. Collaborates with Notch on the apical surface of follicle cells to mediate germline-follicle cell adhesion. Brn has a role in chorion formation. The polypeptide is Beta-1,3-galactosyltransferase brn (brn) (Drosophila melanogaster (Fruit fly)).